A 236-amino-acid polypeptide reads, in one-letter code: Aquaporin Z (236 aa).

2 helical membrane passes run 12-32 and 37-57; these read FFGTFWLVLGGCGSAVLAAGV and IGYAGVALAFGLTVLTMAYAV. An NPA 1 motif is present at residues 66–68; it reads NPA. 3 helical membrane passes run 92 to 112, 136 to 156, and 163 to 183; these read VVGAIVAAATLASIAQGVAGF, AALICEIVLSAGFVFVILGAT, and GFAPIPIGLALTLIHLISIPV. The NPA 2 signature appears at 189–191; it reads NPA. The helical transmembrane segment at 197–217 threads the bilayer; the sequence is ALFVGGWALEQLWLFWLAPIA.

It belongs to the MIP/aquaporin (TC 1.A.8) family. Homotetramer.

Its subcellular location is the cell inner membrane. The enzyme catalyses H2O(in) = H2O(out). Channel that permits osmotically driven movement of water in both directions. It is involved in the osmoregulation and in the maintenance of cell turgor during volume expansion in rapidly growing cells. It mediates rapid entry or exit of water in response to abrupt changes in osmolarity. This Bordetella bronchiseptica (strain ATCC BAA-588 / NCTC 13252 / RB50) (Alcaligenes bronchisepticus) protein is Aquaporin Z.